Here is a 363-residue protein sequence, read N- to C-terminus: 5-formaminoimidazole-4-carboxamide-1-(beta)-D-ribofuranosyl 5'-monophosphate synthetase (363 aa).

Residues histidine 29 and serine 96 each coordinate 5-amino-1-(5-phospho-beta-D-ribosyl)imidazole-4-carboxamide. The region spanning 118 to 354 is the ATP-grasp domain; sequence RDILRWEAER…IALEIKNAIK (237 aa). ATP contacts are provided by residues 148–210 and glutamate 232; that span reads PSEI…CNYC. Position 260 (asparagine 260) interacts with 5-amino-1-(5-phospho-beta-D-ribosyl)imidazole-4-carboxamide. Glutamine 299 and glutamate 312 together coordinate Mg(2+).

It belongs to the phosphohexose mutase family. The cofactor is Mg(2+). It depends on Mn(2+) as a cofactor.

It carries out the reaction 5-amino-1-(5-phospho-beta-D-ribosyl)imidazole-4-carboxamide + formate + ATP = 5-formamido-1-(5-phospho-D-ribosyl)imidazole-4-carboxamide + ADP + phosphate. It participates in purine metabolism; IMP biosynthesis via de novo pathway; 5-formamido-1-(5-phospho-D-ribosyl)imidazole-4-carboxamide from 5-amino-1-(5-phospho-D-ribosyl)imidazole-4-carboxamide (formate route): step 1/1. In terms of biological role, catalyzes the ATP- and formate-dependent formylation of 5-aminoimidazole-4-carboxamide-1-beta-d-ribofuranosyl 5'-monophosphate (AICAR) to 5-formaminoimidazole-4-carboxamide-1-beta-d-ribofuranosyl 5'-monophosphate (FAICAR) in the absence of folates. In Methanobrevibacter smithii (strain ATCC 35061 / DSM 861 / OCM 144 / PS), this protein is 5-formaminoimidazole-4-carboxamide-1-(beta)-D-ribofuranosyl 5'-monophosphate synthetase.